The chain runs to 394 residues: uncharacterized protein (394 aa).

Helical transmembrane passes span 22 to 42 (VLVS…VLLH), 60 to 80 (LALF…LLLF), 81 to 101 (GFTG…APVA), 231 to 251 (LHLA…YLWL), 271 to 291 (GFCA…QLAP), 303 to 323 (LFLV…GDWP), 328 to 348 (LLGV…APWL), and 355 to 375 (ALGP…HAWM).

It is found in the cell membrane. This is an uncharacterized protein from Pseudomonas aeruginosa (strain ATCC 15692 / DSM 22644 / CIP 104116 / JCM 14847 / LMG 12228 / 1C / PRS 101 / PAO1).